The primary structure comprises 148 residues: MICSQYGPVVVGWDGSKTFVNPSRCSKRVGLAEFLELINIDEIDKRLLYLLGIPRGYVTTYKLYAEVLGTSPRHVGWLMARNPLPVILPCHRVVKSDFSLGGYTGGVEVKKKLLAYEGALCGDRPCRVVRPRMIDDVRDALFKSLGLA.

Cys-90 functions as the Nucleophile; methyl group acceptor in the catalytic mechanism.

This sequence belongs to the MGMT family.

Its subcellular location is the cytoplasm. The catalysed reaction is a 6-O-methyl-2'-deoxyguanosine in DNA + L-cysteinyl-[protein] = S-methyl-L-cysteinyl-[protein] + a 2'-deoxyguanosine in DNA. It catalyses the reaction a 4-O-methyl-thymidine in DNA + L-cysteinyl-[protein] = a thymidine in DNA + S-methyl-L-cysteinyl-[protein]. Functionally, involved in the cellular defense against the biological effects of O6-methylguanine (O6-MeG) and O4-methylthymine (O4-MeT) in DNA. Repairs the methylated nucleobase in DNA by stoichiometrically transferring the methyl group to a cysteine residue in the enzyme. This is a suicide reaction: the enzyme is irreversibly inactivated. The polypeptide is Methylated-DNA--protein-cysteine methyltransferase (ogt) (Pyrobaculum aerophilum (strain ATCC 51768 / DSM 7523 / JCM 9630 / CIP 104966 / NBRC 100827 / IM2)).